We begin with the raw amino-acid sequence, 101 residues long: Urease subunit beta (101 aa).

Belongs to the urease beta subunit family. In terms of assembly, heterotrimer of UreA (gamma), UreB (beta) and UreC (alpha) subunits. Three heterotrimers associate to form the active enzyme.

It localises to the cytoplasm. It carries out the reaction urea + 2 H2O + H(+) = hydrogencarbonate + 2 NH4(+). It participates in nitrogen metabolism; urea degradation; CO(2) and NH(3) from urea (urease route): step 1/1. The sequence is that of Urease subunit beta from Burkholderia pseudomallei (strain 668).